A 475-amino-acid polypeptide reads, in one-letter code: Ribulose bisphosphate carboxylase large chain (475 aa).

Residues 1 to 2 (MS) constitute a propeptide that is removed on maturation. Pro3 carries the N-acetylproline modification. Lys14 bears the N6,N6,N6-trimethyllysine mark. Substrate contacts are provided by Asn123 and Thr173. Lys175 acts as the Proton acceptor in catalysis. Substrate is bound at residue Lys177. Mg(2+)-binding residues include Lys201, Asp203, and Glu204. At Lys201 the chain carries N6-carboxylysine. Catalysis depends on His294, which acts as the Proton acceptor. Positions 295, 327, and 379 each coordinate substrate.

This sequence belongs to the RuBisCO large chain family. Type I subfamily. In terms of assembly, heterohexadecamer of 8 large chains and 8 small chains; disulfide-linked. The disulfide link is formed within the large subunit homodimers. It depends on Mg(2+) as a cofactor. The disulfide bond which can form in the large chain dimeric partners within the hexadecamer appears to be associated with oxidative stress and protein turnover.

Its subcellular location is the plastid. It is found in the chloroplast. It carries out the reaction 2 (2R)-3-phosphoglycerate + 2 H(+) = D-ribulose 1,5-bisphosphate + CO2 + H2O. The catalysed reaction is D-ribulose 1,5-bisphosphate + O2 = 2-phosphoglycolate + (2R)-3-phosphoglycerate + 2 H(+). RuBisCO catalyzes two reactions: the carboxylation of D-ribulose 1,5-bisphosphate, the primary event in carbon dioxide fixation, as well as the oxidative fragmentation of the pentose substrate in the photorespiration process. Both reactions occur simultaneously and in competition at the same active site. This chain is Ribulose bisphosphate carboxylase large chain, found in Corylus cornuta (Beaked hazel).